Here is a 91-residue protein sequence, read N- to C-terminus: Large ribosomal subunit protein uL23 (91 aa).

This sequence belongs to the universal ribosomal protein uL23 family. In terms of assembly, part of the 50S ribosomal subunit. Contacts protein L29.

Functionally, binds to 23S rRNA. One of the proteins that surrounds the polypeptide exit tunnel on the outside of the ribosome. This is Large ribosomal subunit protein uL23 from Staphylothermus marinus (strain ATCC 43588 / DSM 3639 / JCM 9404 / F1).